A 589-amino-acid polypeptide reads, in one-letter code: Heterogeneous nuclear ribonucleoprotein L (589 aa).

Residues 1–16 (MSRRLLPRAEKRRRRL) are compositionally biased toward basic residues. Positions 1–100 (MSRRLLPRAE…NYDDPHKTPA (100 aa)) are disordered. Residues 17 to 27 (EQRQQPDEQRR) show a composition bias toward basic and acidic residues. A compositionally biased stretch (gly residues) spans 38–54 (AGGGGGGGRYYGGGSEG). S52 is subject to Phosphoserine. Glycyl lysine isopeptide (Lys-Gly) (interchain with G-Cter in SUMO2) cross-links involve residues K59 and K62. Residues 69 to 90 (QHGGGGGGGGGAGAAGGGGGGE) show a composition bias toward gly residues. S101 carries the phosphoserine modification. Residues 102 to 176 (PVVHIRGLID…HPAFVNYSTS (75 aa)) form the RRM 1 domain. Residue K136 forms a Glycyl lysine isopeptide (Lys-Gly) (interchain with G-Cter in SUMO2) linkage. S185 is subject to Phosphoserine. Positions 193 to 270 (SVLLFTILNP…CTLKIEYAKP (78 aa)) constitute an RRM 2 domain. The residue at position 269 (K269) is an N6-acetyllysine. A compositionally biased stretch (polar residues) spans 284 to 301 (DYTNPNLSGQGDPGSNPN). Positions 284–378 (DYTNPNLSGQ…PPPPPEYGPH (95 aa)) are disordered. S291 and S298 each carry phosphoserine. K302 is covalently cross-linked (Glycyl lysine isopeptide (Lys-Gly) (interchain with G-Cter in SUMO2)). R354 and R358 each carry asymmetric dimethylarginine. A compositionally biased stretch (pro residues) spans 364 to 375 (GHPPPPPPPPEY). A Phosphoserine modification is found at S381. RRM domains lie at 382–478 (PVLM…KDFS) and 495–583 (RIQH…LCFS). S544 is modified (phosphoserine; by CaMK4). K568 participates in a covalent cross-link: Glycyl lysine isopeptide (Lys-Gly) (interchain with G-Cter in SUMO2).

In terms of assembly, identified in a IGF2BP1-dependent mRNP granule complex containing untranslated mRNAs. Interacts with HNRNPLL. Interacts with APEX1; the interaction is DNA-dependent. Component of a complex with SETD2. Interacts with ELAVL1. Part of a transcription inhibitory ribonucleoprotein complex composed at least of the circular RNA circZNF827, ZNF827 and HNRNPK. Interacts with CHD8 in an RNA-dependent manner. Post-translationally, several isoelectric forms of the L protein are probably the results of post-translational modifications. In terms of processing, phosphorylation at Ser-544 by CaMK4 enhances interaction with a CaMK4-responsive RNA element (CaRRE1), and prevents inclusion of the stress axis-regulated exon (STREX) of the KCNMA1 potassium channel transcripts upon membrane depolarization.

The protein localises to the nucleus. The protein resides in the nucleoplasm. It localises to the cytoplasm. Its function is as follows. Splicing factor binding to exonic or intronic sites and acting as either an activator or repressor of exon inclusion. Exhibits a binding preference for CA-rich elements. Component of the heterogeneous nuclear ribonucleoprotein (hnRNP) complexes and associated with most nascent transcripts. Associates, together with APEX1, to the negative calcium responsive element (nCaRE) B2 of the APEX2 promoter. As part of a ribonucleoprotein complex composed at least of ZNF827, HNRNPK and the circular RNA circZNF827 that nucleates the complex on chromatin, may negatively regulate the transcription of genes involved in neuronal differentiation. Regulates alternative splicing of a core group of genes involved in neuronal differentiation, likely by mediating H3K36me3-coupled transcription elongation and co-transcriptional RNA processing via interaction with CHD8. The protein is Heterogeneous nuclear ribonucleoprotein L (HNRNPL) of Homo sapiens (Human).